Reading from the N-terminus, the 262-residue chain is Hydroxyethylthiazole kinase (262 aa).

Met-50 provides a ligand contact to substrate. ATP-binding residues include Arg-125 and Thr-171. Residue Gly-198 coordinates substrate.

The protein belongs to the Thz kinase family. It depends on Mg(2+) as a cofactor.

It carries out the reaction 5-(2-hydroxyethyl)-4-methylthiazole + ATP = 4-methyl-5-(2-phosphooxyethyl)-thiazole + ADP + H(+). It functions in the pathway cofactor biosynthesis; thiamine diphosphate biosynthesis; 4-methyl-5-(2-phosphoethyl)-thiazole from 5-(2-hydroxyethyl)-4-methylthiazole: step 1/1. Its function is as follows. Catalyzes the phosphorylation of the hydroxyl group of 4-methyl-5-beta-hydroxyethylthiazole (THZ). The polypeptide is Hydroxyethylthiazole kinase (Citrobacter koseri (strain ATCC BAA-895 / CDC 4225-83 / SGSC4696)).